Reading from the N-terminus, the 146-residue chain is Phospholipase A2, membrane associated (146 aa).

An N-terminal signal peptide occupies residues 1–21 (MKVLLLLAASIMAFGSIQVQG). 7 cysteine pairs are disulfide-bonded: Cys-47/Cys-139, Cys-49/Cys-65, Cys-64/Cys-119, Cys-70/Cys-146, Cys-71/Cys-112, Cys-80/Cys-105, and Cys-98/Cys-110. 3 residues coordinate Ca(2+): His-48, Gly-50, and Gly-52. His-68 is an active-site residue. Asp-69 contacts Ca(2+). Asp-113 is a catalytic residue.

This sequence belongs to the phospholipase A2 family. Requires Ca(2+) as cofactor. In terms of tissue distribution, mainly in the Paneth cells adjacent to the stem population in the small intestines.

It is found in the secreted. The protein localises to the cell membrane. It localises to the mitochondrion outer membrane. It carries out the reaction a 1,2-diacyl-sn-glycero-3-phosphoethanolamine + H2O = a 1-acyl-sn-glycero-3-phosphoethanolamine + a fatty acid + H(+). The catalysed reaction is 1-hexadecanoyl-2-(9Z-octadecenoyl)-sn-glycero-3-phosphoethanolamine + H2O = 1-hexadecanoyl-sn-glycero-3-phosphoethanolamine + (9Z)-octadecenoate + H(+). The enzyme catalyses 1-hexadecanoyl-2-(9Z,12Z-octadecadienoyl)-sn-glycero-3-phosphoethanolamine + H2O = 1-hexadecanoyl-sn-glycero-3-phosphoethanolamine + (9Z,12Z)-octadecadienoate + H(+). It catalyses the reaction 1-hexadecanoyl-2-(5Z,8Z,11Z,14Z-eicosatetraenoyl)-sn-glycero-3-phosphoethanolamine + H2O = 1-hexadecanoyl-sn-glycero-3-phosphoethanolamine + (5Z,8Z,11Z,14Z)-eicosatetraenoate + H(+). It carries out the reaction N-hexadecanoyl-1,2-di-(9Z-octadecenoyl)-sn-glycero-3-phosphoethanolamine + H2O = N-hexadecanoyl-1-(9Z-octadecenoyl)-sn-glycero-3-phosphoethanolamine + (9Z)-octadecenoate + H(+). The catalysed reaction is 1,2-dihexadecanoyl-sn-glycero-3-phospho-(1'-sn-glycerol) + H2O = 1-hexadecanoyl-sn-glycero-3-phospho-(1'-sn-glycerol) + hexadecanoate + H(+). The enzyme catalyses 1-hexadecanoyl-2-(9Z-octadecenoyl)-sn-glycero-3-phosphoglycerol + H2O = 1-hexadecanoyl-sn-glycero-3-phosphoglycerol + (9Z)-octadecenoate + H(+). It catalyses the reaction 1-hexadecanoyl-2-(9Z-octadecenoyl)-sn-glycero-3-phospho-(1'-sn-glycerol) + H2O = 1-hexadecanoyl-sn-glycero-3-phospho-(1'-sn-glycerol) + (9Z)-octadecenoate + H(+). It carries out the reaction a 1,2-diacyl-sn-glycero-3-phosphocholine + H2O = a 1-acyl-sn-glycero-3-phosphocholine + a fatty acid + H(+). The catalysed reaction is 1,2-dihexadecanoyl-sn-glycero-3-phosphocholine + H2O = 1-hexadecanoyl-sn-glycero-3-phosphocholine + hexadecanoate + H(+). The enzyme catalyses 1-hexadecanoyl-2-(9Z-octadecenoyl)-sn-glycero-3-phosphocholine + H2O = 1-hexadecanoyl-sn-glycero-3-phosphocholine + (9Z)-octadecenoate + H(+). It catalyses the reaction 1-hexadecanoyl-2-(9Z,12Z-octadecadienoyl)-sn-glycero-3-phosphocholine + H2O = (9Z,12Z)-octadecadienoate + 1-hexadecanoyl-sn-glycero-3-phosphocholine + H(+). It carries out the reaction 1-hexadecanoyl-2-(4Z,7Z,10Z,13Z,16Z,19Z-docosahexaenoyl)-sn-glycero-3-phosphocholine + H2O = (4Z,7Z,10Z,13Z,16Z,19Z)-docosahexaenoate + 1-hexadecanoyl-sn-glycero-3-phosphocholine + H(+). Secretory calcium-dependent phospholipase A2 that primarily targets extracellular phospholipids with implications in host antimicrobial defense, inflammatory response and tissue regeneration. Hydrolyzes the ester bond of the fatty acyl group attached at sn-2 position of phospholipids (phospholipase A2 activity) with preference for phosphatidylethanolamines and phosphatidylglycerols over phosphatidylcholines. Contributes to lipid remodeling of cellular membranes and generation of lipid mediators involved in pathogen clearance. Displays bactericidal activity against Gram-positive bacteria by directly hydrolyzing phospholipids of the bacterial membrane. Upon sterile inflammation, targets membrane phospholipids of extracellular mitochondria released from activated platelets, generating free unsaturated fatty acids such as arachidonate that is used by neighboring leukocytes to synthesize inflammatory eicosanoids such as leukotrienes. Simultaneously, by compromising mitochondrial membrane integrity, promotes the release in circulation of potent damage-associated molecular pattern molecules that activate the innate immune response. Plays a stem cell regulator role in the intestinal crypt. Within intracellular compartment mediates Paneth cell differentiation and its stem cell supporting functions by inhibiting Wnt signaling pathway in intestinal stem cell (ICS). Secreted in the intestinal lumen upon inflammation, acts in an autocrine way and promotes prostaglandin E2 synthesis that stimulates Wnt signaling pathway in ICS cells and tissue regeneration. May play a role in the biosynthesis of N-acyl ethanolamines that regulate energy metabolism and inflammation. Hydrolyzes N-acyl phosphatidylethanolamines to N-acyl lysophosphatidylethanolamines, which are further cleaved by a lysophospholipase D to release N-acyl ethanolamines. Independent of its catalytic activity, acts as a ligand for integrins. Binds to and activates integrins ITGAV:ITGB3, ITGA4:ITGB1 and ITGA5:ITGB1. Binds to a site (site 2) which is distinct from the classical ligand-binding site (site 1) and induces integrin conformational changes and enhanced ligand binding to site 1. Induces cell proliferation in an integrin-dependent manner. This is Phospholipase A2, membrane associated (Pla2g2a) from Mus musculus (Mouse).